The sequence spans 734 residues: Exonuclease 1 (734 aa).

The interval 1–99 (MGIQGLLQFL…KARREKRQTN (99 aa)) is N-domain. Mg(2+)-binding residues include aspartate 30, aspartate 78, glutamate 150, aspartate 152, aspartate 171, aspartate 173, and aspartate 225. Residues 138 to 229 (RSEGVDYIVA…ILSGCDYLPS (92 aa)) form an I-domain region. Disordered regions lie at residues 599-650 (EAEN…CQFT), 656-675 (AHQS…KVPG), and 685-716 (GLRT…NENV). Residues 604 to 620 (PSWQSSCIKSDTVSQID) show a composition bias toward polar residues. Basic and acidic residues predominate over residues 621–641 (SNEKLLKKQDIEDTDSDEHAS). Residues 700–715 (GLTNRSNTKATRNNEN) show a composition bias toward polar residues.

This sequence belongs to the XPG/RAD2 endonuclease family. EXO1 subfamily. It depends on Mg(2+) as a cofactor.

The protein localises to the nucleus. In terms of biological role, 5'-&gt;3' double-stranded DNA exonuclease which may also contain a cryptic 3'-&gt;5' double-stranded DNA exonuclease activity. Also exhibits endonuclease activity against 5'-overhanging flap structures similar to those generated by displacement synthesis when DNA polymerase encounters the 5'-end of a downstream Okazaki fragment. Required for DNA mismatch repair (MMR). The chain is Exonuclease 1 (exo1) from Xenopus laevis (African clawed frog).